A 114-amino-acid chain; its full sequence is Protein lin-52 homolog (114 aa).

Phosphoserine is present on residues Ser26 and Ser51.

This sequence belongs to the lin-52 family. As to quaternary structure, component of the DREAM complex (also named LINC complex) at least composed of E2F4, E2F5, LIN9, LIN37, LIN52, LIN54, MYBL1, MYBL2, RBL1, RBL2, RBBP4, TFDP1 and TFDP2. The complex exists in quiescent cells where it represses cell cycle-dependent genes. It dissociates in S phase when LIN9, LIN37, LIN52 and LIN54 form a subcomplex that binds to MYBL2.

The polypeptide is Protein lin-52 homolog (LIN52) (Pongo abelii (Sumatran orangutan)).